Consider the following 221-residue polypeptide: NAD(P)H-hydrate epimerase (221 aa).

The region spanning 10–210 (MQQIDNYTIE…DVGMLIPDDF (201 aa)) is the YjeF N-terminal domain. Position 58 to 62 (58 to 62 (NNGAD)) interacts with (6S)-NADPHX. N59 and D120 together coordinate K(+). (6S)-NADPHX is bound by residues 124–130 (GVGLNNV) and D153. T156 provides a ligand contact to K(+).

Belongs to the NnrE/AIBP family. K(+) serves as cofactor.

It carries out the reaction (6R)-NADHX = (6S)-NADHX. The catalysed reaction is (6R)-NADPHX = (6S)-NADPHX. Its function is as follows. Catalyzes the epimerization of the S- and R-forms of NAD(P)HX, a damaged form of NAD(P)H that is a result of enzymatic or heat-dependent hydration. This is a prerequisite for the S-specific NAD(P)H-hydrate dehydratase to allow the repair of both epimers of NAD(P)HX. The chain is NAD(P)H-hydrate epimerase from Leuconostoc mesenteroides subsp. mesenteroides (strain ATCC 8293 / DSM 20343 / BCRC 11652 / CCM 1803 / JCM 6124 / NCDO 523 / NBRC 100496 / NCIMB 8023 / NCTC 12954 / NRRL B-1118 / 37Y).